Consider the following 460-residue polypeptide: G-protein coupled receptor 22 (460 aa).

Residues methionine 1–threonine 74 are Cytoplasmic-facing. The helical transmembrane segment at glycine 75 to tyrosine 95 threads the bilayer. Topologically, residues cysteine 96 to histidine 114 are extracellular. The chain crosses the membrane as a helical span at residues valine 115–proline 135. Over leucine 136–cysteine 144 the chain is Cytoplasmic. The helical transmembrane segment at cysteine 145 to isoleucine 165 threads the bilayer. The Extracellular segment spans residues threonine 166–arginine 185. The chain crosses the membrane as a helical span at residues alanine 186–isoleucine 206. Over glutamate 207–glycine 235 the chain is Cytoplasmic. A helical transmembrane segment spans residues leucine 236–valine 256. At threonine 257–serine 343 the chain is on the extracellular side. A compositionally biased stretch (basic residues) spans valine 276–threonine 286. The tract at residues valine 276–proline 309 is disordered. Residues isoleucine 287 to glycine 305 show a composition bias toward polar residues. The chain crosses the membrane as a helical span at residues leucine 344 to isoleucine 364. The Cytoplasmic portion of the chain corresponds to leucine 365 to arginine 377. A helical membrane pass occupies residues leucine 378 to threonine 398. The Extracellular portion of the chain corresponds to arginine 399–glutamate 460.

Belongs to the G-protein coupled receptor 1 family.

The protein localises to the cell membrane. Orphan G-protein coupled receptor that regulates cilia length and structure in the Kupffer's vesicle leading to the left-right asymmetry development by establishing a directional fluid flow. This is G-protein coupled receptor 22 (gpr22a) from Danio rerio (Zebrafish).